The following is a 930-amino-acid chain: Isoleucine--tRNA ligase (930 aa).

The 'HIGH' region motif lies at P57–H67. E554 lines the L-isoleucyl-5'-AMP pocket. The 'KMSKS' region signature appears at K595–S599. Residue K598 coordinates ATP. The Zn(2+) site is built by C888, C891, C908, and C911.

The protein belongs to the class-I aminoacyl-tRNA synthetase family. IleS type 1 subfamily. As to quaternary structure, monomer. The cofactor is Zn(2+).

It is found in the cytoplasm. It catalyses the reaction tRNA(Ile) + L-isoleucine + ATP = L-isoleucyl-tRNA(Ile) + AMP + diphosphate. Its function is as follows. Catalyzes the attachment of isoleucine to tRNA(Ile). As IleRS can inadvertently accommodate and process structurally similar amino acids such as valine, to avoid such errors it has two additional distinct tRNA(Ile)-dependent editing activities. One activity is designated as 'pretransfer' editing and involves the hydrolysis of activated Val-AMP. The other activity is designated 'posttransfer' editing and involves deacylation of mischarged Val-tRNA(Ile). The protein is Isoleucine--tRNA ligase of Streptococcus pneumoniae (strain ATCC 700669 / Spain 23F-1).